The chain runs to 151 residues: Cell division protein SepF (151 aa).

The segment at 31-53 (EEVEEPRRRSRTGVKQERETGQN) is disordered.

Belongs to the SepF family. In terms of assembly, homodimer. Interacts with FtsZ.

The protein resides in the cytoplasm. Cell division protein that is part of the divisome complex and is recruited early to the Z-ring. Probably stimulates Z-ring formation, perhaps through the cross-linking of FtsZ protofilaments. Its function overlaps with FtsA. The chain is Cell division protein SepF from Halalkalibacterium halodurans (strain ATCC BAA-125 / DSM 18197 / FERM 7344 / JCM 9153 / C-125) (Bacillus halodurans).